A 326-amino-acid polypeptide reads, in one-letter code: Putative ankyrin repeat protein L25 (326 aa).

ANK repeat units follow at residues 11-40, 42-65, 66-95, 96-125, 127-154, 155-184, 185-214, 216-244, 246-274, and 275-304; these read RSEY…DLNV, KLFY…NIHV, DDEF…DIHV, NDDA…DIHA, NELV…DIHA, EDDE…NFRA, ENDY…DIHA, DEYA…DIHA, NDYG…NIHA, and KDDY…NIHA.

In Acanthamoeba polyphaga mimivirus (APMV), this protein is Putative ankyrin repeat protein L25.